The primary structure comprises 108 residues: Glutaredoxin (108 aa).

Positions 3 to 103 (LAKAKEIVSG…PLLTEAGAIA (101 aa)) constitute a Glutaredoxin domain. A disulfide bridge connects residues C23 and C26.

The protein belongs to the glutaredoxin family. CPYC subfamily.

The protein resides in the cytoplasm. In terms of biological role, has a glutathione-disulfide oxidoreductase activity in the presence of NADPH and glutathione reductase. Reduces low molecular weight disulfides and proteins. In Solanum lycopersicum (Tomato), this protein is Glutaredoxin.